The chain runs to 93 residues: Large ribosomal subunit protein uL23 (93 aa).

This sequence belongs to the universal ribosomal protein uL23 family. As to quaternary structure, part of the 50S ribosomal subunit. Contacts protein L29, and trigger factor when it is bound to the ribosome.

One of the early assembly proteins it binds 23S rRNA. One of the proteins that surrounds the polypeptide exit tunnel on the outside of the ribosome. Forms the main docking site for trigger factor binding to the ribosome. The sequence is that of Large ribosomal subunit protein uL23 from Natranaerobius thermophilus (strain ATCC BAA-1301 / DSM 18059 / JW/NM-WN-LF).